A 79-amino-acid chain; its full sequence is Spidroin-1 (79 aa).

The protein belongs to the silk fibroin family. Major subunit, with spidroin 2, of the dragline silk.

Its subcellular location is the secreted. The protein resides in the extracellular space. Functionally, spiders' major ampullate silk possesses unique characteristics of strength and elasticity. Fibroin consists of pseudocrystalline regions of antiparallel beta-sheet interspersed with elastic amorphous segments. The sequence is that of Spidroin-1 from Araneus bicentenarius (Giant lichen orbweaver).